An 88-amino-acid polypeptide reads, in one-letter code: MRLDKYLKVSRIIKRRTVAKEVADKGRIKVNGILAKSSTDLKVNDQVEIRFGNKLLLVKVLEMKDSTKKEDAAGMYEIISETRVEENV.

The S4 RNA-binding domain occupies 1-60; that stretch reads MRLDKYLKVSRIIKRRTVAKEVADKGRIKVNGILAKSSTDLKVNDQVEIRFGNKLLLVKV.

This sequence belongs to the RqcP family. Associates with stalled 50S ribosomal subunits. Binds to RqcH, 23S rRNA and the P-site tRNA. Does not require RqcH for association with 50S subunits.

Its function is as follows. Key component of the ribosome quality control system (RQC), a ribosome-associated complex that mediates the extraction of incompletely synthesized nascent chains from stalled ribosomes and their subsequent degradation. RqcH recruits Ala-charged tRNA, and with RqcP directs the elongation of stalled nascent chains on 50S ribosomal subunits, leading to non-templated C-terminal alanine extensions (Ala tail). The Ala tail promotes nascent chain degradation. RqcP is associated with the translocation-like movement of the peptidyl-tRNA from the A-site into the P-site. In Streptococcus pneumoniae (strain ATCC BAA-255 / R6), this protein is RQC P-site tRNA stabilizing factor.